Reading from the N-terminus, the 315-residue chain is Ribosomal RNA small subunit methyltransferase H (315 aa).

Residues 35–37 (GGH), aspartate 55, phenylalanine 80, aspartate 102, and glutamine 109 contribute to the S-adenosyl-L-methionine site.

It belongs to the methyltransferase superfamily. RsmH family.

It is found in the cytoplasm. It carries out the reaction cytidine(1402) in 16S rRNA + S-adenosyl-L-methionine = N(4)-methylcytidine(1402) in 16S rRNA + S-adenosyl-L-homocysteine + H(+). Functionally, specifically methylates the N4 position of cytidine in position 1402 (C1402) of 16S rRNA. This chain is Ribosomal RNA small subunit methyltransferase H, found in Buchnera aphidicola subsp. Baizongia pistaciae (strain Bp).